We begin with the raw amino-acid sequence, 272 residues long: HMP-PP phosphatase (272 aa).

The active-site Nucleophile is the aspartate 8. Aspartate 8, aspartate 10, and aspartate 212 together coordinate Mg(2+).

It belongs to the HAD-like hydrolase superfamily. Cof family. It depends on Mg(2+) as a cofactor.

It carries out the reaction 4-amino-2-methyl-5-(diphosphooxymethyl)pyrimidine + H2O = 4-amino-2-methyl-5-(phosphooxymethyl)pyrimidine + phosphate + H(+). Functionally, catalyzes the hydrolysis of 4-amino-2-methyl-5-hydroxymethylpyrimidine pyrophosphate (HMP-PP) to 4-amino-2-methyl-5-hydroxymethylpyrimidine phosphate (HMP-P). The protein is HMP-PP phosphatase of Escherichia coli (strain 55989 / EAEC).